An 834-amino-acid chain; its full sequence is MKHTLALLAPLLGLGLGLALSQLAAGATDCKFLGPAEHLTFTPAARARWLAPRVRAPGLLDSLYGTVRRFLSVVQLNPFPSELVKALLNELASVKVNEVVRYEAGYVVCAVIAGLYLLLVPTAGLCFCCCRCHRRCGGRVKTEHKALACERAALMVFLLLTTLLLLIGVVCAFVTNQRTHEQMGPSIEAMPETLLSLWGLVSDVPQELQAVAQQFSLPQEQVSEELDGVGVSIGSAIHTQLRSSVYPLLAAVGSLGQVLQVSVHHLQTLNATVVELQAGQQDLEPAIREHRDRLLELLQEARCQGDCAGALSWARTLELGADFSQVPSVDHVLHQLKGVPEANFSSMVQEENSTFNALPALAAMQTSSVVQELKKAVAQQPEGVRTLAEGFPGLEAASRWAQALQEVEESSRPYLQEVQRYETYRWIVGCVLCSVVLFVVLCNLLGLNLGIWGLSARDDPSHPEAKGEAGARFLMAGVGLSFLFAAPLILLVFATFLVGGNVQTLVCQSWENGELFEFADTPGNLPPSMNLSQLLGLRKNISIHQAYQQCKEGAALWTVLQLNDSYDLEEHLDINQYTNKLRQELQSLKVDTQSLDLLSSAARRDLEALQSSGLQRIHYPDFLVQIQRPVVKTSMEQLAQELQGLAQAQDNSVLGQRLQEEAQGLRNLHQEKVVPQQSLVAKLNLSVRALESSAPNLQLETSDVLANVTYLKGELPAWAARILRNVSECFLAREMGYFSQYVAWVREEVTQRIATCQPLSGALDNSRVILCDMMADPWNAFWFCLAWCTFFLIPSIIFAVKTSKYFRPIRKRLSSTSSEETQLFHIPRVTSLKL.

The first 26 residues, 1-26 (MKHTLALLAPLLGLGLGLALSQLAAG), serve as a signal peptide directing secretion. Topologically, residues 27–106 (ATDCKFLGPA…NEVVRYEAGY (80 aa)) are extracellular. The chain crosses the membrane as a helical span at residues 107 to 127 (VVCAVIAGLYLLLVPTAGLCF). The Cytoplasmic segment spans residues 128–153 (CCCRCHRRCGGRVKTEHKALACERAA). A helical transmembrane segment spans residues 154 to 174 (LMVFLLLTTLLLLIGVVCAFV). Over 175 to 426 (TNQRTHEQMG…EVQRYETYRW (252 aa)) the chain is Extracellular. N-linked (GlcNAc...) asparagine glycosylation occurs at Asn-270. Residues 427–447 (IVGCVLCSVVLFVVLCNLLGL) traverse the membrane as a helical segment. At 448–472 (NLGIWGLSARDDPSHPEAKGEAGAR) the chain is on the cytoplasmic side. The chain crosses the membrane as a helical span at residues 473 to 493 (FLMAGVGLSFLFAAPLILLVF). The Extracellular portion of the chain corresponds to 494 to 779 (ATFLVGGNVQ…LCDMMADPWN (286 aa)). Ser-727 carries the phosphoserine modification. Residues 780 to 800 (AFWFCLAWCTFFLIPSIIFAV) form a helical membrane-spanning segment. The Cytoplasmic portion of the chain corresponds to 801-834 (KTSKYFRPIRKRLSSTSSEETQLFHIPRVTSLKL). Residue Ser-818 is modified to Phosphoserine.

It belongs to the prominin family. In terms of assembly, binds cholesterol. Post-translationally, glycosylated. In terms of tissue distribution, present in saliva within small membrane particles (at protein level). Expressed in kidney, prostate, trachea, esophagus, salivary gland, thyroid gland, mammary gland adrenal gland, placenta, stomach, spinal cord and liver. In submucosal tumor, expressed in spindle-shaped or stellate stromal cells. Expressed in prostate cancer cell lines.

The protein resides in the apical cell membrane. Its subcellular location is the basolateral cell membrane. The protein localises to the cell projection. It is found in the microvillus membrane. It localises to the cilium membrane. This chain is Prominin-2 (PROM2), found in Homo sapiens (Human).